The following is an 810-amino-acid chain: AMP deaminase (810 aa).

Polar residues predominate over residues 1–10; that stretch reads MDNQATQRLN. 2 disordered regions span residues 1-61 and 114-137; these read MDNQ…SHES and AAMNKGHDSADHASQNSGGKPRTL. Phosphoserine occurs at positions 19, 58, and 61. A compositionally biased stretch (polar residues) spans 125-137; that stretch reads HASQNSGGKPRTL. Serine 138 carries the phosphoserine modification. Zn(2+)-binding residues include histidine 362 and histidine 364. Residues histidine 364 and 433–438 contribute to the substrate site; that span reads KFNLKY. A Zn(2+)-binding site is contributed by histidine 630. Residue glutamate 633 participates in substrate binding. The active-site Proton acceptor is the histidine 652. Zn(2+) is bound at residue aspartate 707. Position 708 to 711 (708 to 711) interacts with substrate; sequence DPLQ.

The protein belongs to the metallo-dependent hydrolases superfamily. Adenosine and AMP deaminases family. In terms of assembly, homotetramer. Zn(2+) serves as cofactor.

The catalysed reaction is AMP + H2O + H(+) = IMP + NH4(+). It participates in purine metabolism; IMP biosynthesis via salvage pathway; IMP from AMP: step 1/1. In terms of biological role, AMP deaminase plays a critical role in energy metabolism. This chain is AMP deaminase (AMD1), found in Saccharomyces cerevisiae (strain ATCC 204508 / S288c) (Baker's yeast).